The following is a 347-amino-acid chain: D-alanine--D-alanine ligase (347 aa).

An ATP-grasp domain is found at 131 to 333 (KRVLESAGIA…YPELIERLVD (203 aa)). ATP is bound at residue 161–216 (EEKLAYPVFTKPSNMGSSVGISKSENQEELRQALKLAFRYDSRVLVEQGVNAREIE). Residues aspartate 287, glutamate 300, and asparagine 302 each contribute to the Mg(2+) site.

Belongs to the D-alanine--D-alanine ligase family. The cofactor is Mg(2+). It depends on Mn(2+) as a cofactor.

The protein resides in the cytoplasm. It carries out the reaction 2 D-alanine + ATP = D-alanyl-D-alanine + ADP + phosphate + H(+). It participates in cell wall biogenesis; peptidoglycan biosynthesis. Cell wall formation. The protein is D-alanine--D-alanine ligase of Streptococcus pneumoniae serotype 19F (strain G54).